Reading from the N-terminus, the 108-residue chain is Holo-[acyl-carrier-protein] synthase (108 aa).

Residues Asp9 and Glu52 each coordinate Mg(2+).

This sequence belongs to the P-Pant transferase superfamily. AcpS family. It depends on Mg(2+) as a cofactor.

The protein localises to the cytoplasm. The catalysed reaction is apo-[ACP] + CoA = holo-[ACP] + adenosine 3',5'-bisphosphate + H(+). Functionally, transfers the 4'-phosphopantetheine moiety from coenzyme A to a Ser of acyl-carrier-protein. This Coprothermobacter proteolyticus (strain ATCC 35245 / DSM 5265 / OCM 4 / BT) protein is Holo-[acyl-carrier-protein] synthase.